The following is a 378-amino-acid chain: Flagellar P-ring protein 2 (378 aa).

A signal peptide spans 1-33 (MHEVSDKTNAIHPLQRVSRALFALGLLCFAAMA).

This sequence belongs to the FlgI family. In terms of assembly, the basal body constitutes a major portion of the flagellar organelle and consists of four rings (L,P,S, and M) mounted on a central rod.

The protein resides in the periplasm. The protein localises to the bacterial flagellum basal body. Functionally, assembles around the rod to form the L-ring and probably protects the motor/basal body from shearing forces during rotation. This Hahella chejuensis (strain KCTC 2396) protein is Flagellar P-ring protein 2.